Reading from the N-terminus, the 319-residue chain is Acetyl esterase (319 aa).

The Involved in the stabilization of the negatively charged intermediate by the formation of the oxyanion hole signature appears at H91–G93. Active-site residues include S165, D262, and H292.

The protein belongs to the 'GDXG' lipolytic enzyme family. In terms of assembly, homodimer. Interacts with MalT and MelA.

Its subcellular location is the cytoplasm. Its function is as follows. Displays esterase activity towards short chain fatty esters (acyl chain length of up to 8 carbons). Able to hydrolyze triacetylglycerol (triacetin) and tributyrylglycerol (tributyrin), but not trioleylglycerol (triolein) or cholesterol oleate. Negatively regulates MalT activity by antagonizing maltotriose binding. Inhibits MelA galactosidase activity. The sequence is that of Acetyl esterase from Escherichia coli O81 (strain ED1a).